Reading from the N-terminus, the 559-residue chain is Dihydroxy-acid dehydratase (559 aa).

Asp81 provides a ligand contact to Mg(2+). Position 122 (Cys122) interacts with [2Fe-2S] cluster. 2 residues coordinate Mg(2+): Asp123 and Lys124. Residue Lys124 is modified to N6-carboxylysine. Cys195 is a binding site for [2Fe-2S] cluster. Glu448 contacts Mg(2+). Ser474 acts as the Proton acceptor in catalysis.

Belongs to the IlvD/Edd family. As to quaternary structure, homodimer. Requires [2Fe-2S] cluster as cofactor. The cofactor is Mg(2+).

The enzyme catalyses (2R)-2,3-dihydroxy-3-methylbutanoate = 3-methyl-2-oxobutanoate + H2O. The catalysed reaction is (2R,3R)-2,3-dihydroxy-3-methylpentanoate = (S)-3-methyl-2-oxopentanoate + H2O. Its pathway is amino-acid biosynthesis; L-isoleucine biosynthesis; L-isoleucine from 2-oxobutanoate: step 3/4. The protein operates within amino-acid biosynthesis; L-valine biosynthesis; L-valine from pyruvate: step 3/4. Functions in the biosynthesis of branched-chain amino acids. Catalyzes the dehydration of (2R,3R)-2,3-dihydroxy-3-methylpentanoate (2,3-dihydroxy-3-methylvalerate) into 2-oxo-3-methylpentanoate (2-oxo-3-methylvalerate) and of (2R)-2,3-dihydroxy-3-methylbutanoate (2,3-dihydroxyisovalerate) into 2-oxo-3-methylbutanoate (2-oxoisovalerate), the penultimate precursor to L-isoleucine and L-valine, respectively. The chain is Dihydroxy-acid dehydratase from Geobacillus kaustophilus (strain HTA426).